The following is a 160-amino-acid chain: Cytochrome b6-f complex subunit 4 (160 aa).

The next 3 helical transmembrane spans lie at leucine 36–valine 56, leucine 95–glutamate 115, and threonine 131–isoleucine 151.

This sequence belongs to the cytochrome b family. PetD subfamily. The 4 large subunits of the cytochrome b6-f complex are cytochrome b6, subunit IV (17 kDa polypeptide, petD), cytochrome f and the Rieske protein, while the 4 small subunits are petG, petL, petM and petN. The complex functions as a dimer.

It is found in the plastid. The protein localises to the chloroplast thylakoid membrane. Functionally, component of the cytochrome b6-f complex, which mediates electron transfer between photosystem II (PSII) and photosystem I (PSI), cyclic electron flow around PSI, and state transitions. This chain is Cytochrome b6-f complex subunit 4, found in Stigeoclonium helveticum (Green alga).